The chain runs to 430 residues: Gamma-glutamyl phosphate reductase (430 aa).

It belongs to the gamma-glutamyl phosphate reductase family.

The protein resides in the cytoplasm. It carries out the reaction L-glutamate 5-semialdehyde + phosphate + NADP(+) = L-glutamyl 5-phosphate + NADPH + H(+). Its pathway is amino-acid biosynthesis; L-proline biosynthesis; L-glutamate 5-semialdehyde from L-glutamate: step 2/2. Its function is as follows. Catalyzes the NADPH-dependent reduction of L-glutamate 5-phosphate into L-glutamate 5-semialdehyde and phosphate. The product spontaneously undergoes cyclization to form 1-pyrroline-5-carboxylate. This Rhodopseudomonas palustris (strain ATCC BAA-98 / CGA009) protein is Gamma-glutamyl phosphate reductase.